The chain runs to 476 residues: Protein transport protein Sec61 subunit alpha isoform 1 (476 aa).

Over 1 to 33 (MAIKFLEVIKPFCVILPEIQKPERKIQFKEKVL) the chain is Cytoplasmic. A helical membrane pass occupies residues 34–53 (WTAITLFIFLVCCQIPLFGI). Over 54-76 (MSSDSADPFYWMRVILASNRGTL) the chain is Lumenal. A helical transmembrane segment spans residues 77-96 (MELGISPIVTSGLIMQLLAG). The Cytoplasmic segment spans residues 97–117 (AKIIEVGDTPKDRALFNGAQK). A helical membrane pass occupies residues 118–138 (LFGMIITIGQSIVYVMTGMYG). Over 139-144 (DPSEMG) the chain is Lumenal. Residues 145-165 (AGICLLITIQLFVAGLIVLLL) form a helical membrane-spanning segment. The Cytoplasmic portion of the chain corresponds to 166–172 (DELLQKG). The helical transmembrane segment at 173-193 (YGLGSGISLFIATNICETIVW) threads the bilayer. At 194 to 240 (KAFSPTTVNTGRGMEFEGAIIALFHLLATRTDKVRALREAFYRQNLP) the chain is on the lumenal side. The helical transmembrane segment at 241-261 (NLMNLIATIFVFAVVIYFQGF) threads the bilayer. Topologically, residues 262–288 (RVDLPIKSARYRGQYNTYPIKLFYTSN) are cytoplasmic. Residues 289–309 (IPIILQSALVSNLYVISQMLS) form a helical membrane-spanning segment. Over 310-354 (ARFSGNLLVSLLGTWSDTSSGGPARAYPVGGLCYYLSPPESFGSV) the chain is Lumenal. The helical transmembrane segment at 355 to 375 (LEDPVHAVVYIVFMLGSCAFF) threads the bilayer. Residues 376–420 (SKTWIEVSGSSAKDVAKQLKEQQMVMRGHRETSMVHELNRYIPTA) lie on the Cytoplasmic side of the membrane. The helical transmembrane segment at 421–441 (AAFGGLCIGALSVLADFLGAI) threads the bilayer. Topologically, residues 442–445 (GSGT) are lumenal. The helical transmembrane segment at 446–462 (GILLAVTIIYQYFEIFV) threads the bilayer. Topologically, residues 463–476 (KEQSEVGSMGALLF) are cytoplasmic.

Belongs to the SecY/SEC61-alpha family. In terms of assembly, the SEC61 channel-forming translocon complex consists of channel-forming core components SEC61A1, SEC61B and SEC61G and different auxiliary components such as SEC62 and SEC63. The SEC61 channel associates with the multi-pass translocon (MPT) complex. Expressed in proximal and distal tubules in kidney (at protein level).

It localises to the endoplasmic reticulum membrane. In terms of biological role, component of SEC61 channel-forming translocon complex that mediates transport of signal peptide-containing precursor polypeptides across the endoplasmic reticulum (ER). Forms a ribosome receptor and a gated pore in the ER membrane, both functions required for cotranslational translocation of nascent polypeptides. May cooperate with auxiliary protein SEC62, SEC63 and HSPA5/BiP to enable post-translational transport of small presecretory proteins. The SEC61 channel is also involved in ER membrane insertion of transmembrane proteins: it mediates membrane insertion of the first few transmembrane segments of proteins, while insertion of subsequent transmembrane regions of multi-pass membrane proteins is mediated by the multi-pass translocon (MPT) complex. The SEC61 channel cooperates with the translocating protein TRAM1 to import nascent proteins into the ER. Controls the passive efflux of calcium ions from the ER lumen to the cytosol through SEC61 channel, contributing to the maintenance of cellular calcium homeostasis. Plays a critical role in nephrogenesis, specifically at pronephros stage. This chain is Protein transport protein Sec61 subunit alpha isoform 1 (SEC61A1), found in Homo sapiens (Human).